The primary structure comprises 636 residues: 1-deoxy-D-xylulose-5-phosphate synthase (636 aa).

Residues histidine 72 and glycine 113–alanine 115 contribute to the thiamine diphosphate site. A Mg(2+)-binding site is contributed by aspartate 144. Thiamine diphosphate contacts are provided by residues glycine 145 to alanine 146, asparagine 174, tyrosine 287, and glutamate 370. Asparagine 174 serves as a coordination point for Mg(2+).

The protein belongs to the transketolase family. DXPS subfamily. In terms of assembly, homodimer. Mg(2+) is required as a cofactor. It depends on thiamine diphosphate as a cofactor.

It catalyses the reaction D-glyceraldehyde 3-phosphate + pyruvate + H(+) = 1-deoxy-D-xylulose 5-phosphate + CO2. Its pathway is metabolic intermediate biosynthesis; 1-deoxy-D-xylulose 5-phosphate biosynthesis; 1-deoxy-D-xylulose 5-phosphate from D-glyceraldehyde 3-phosphate and pyruvate: step 1/1. Functionally, catalyzes the acyloin condensation reaction between C atoms 2 and 3 of pyruvate and glyceraldehyde 3-phosphate to yield 1-deoxy-D-xylulose-5-phosphate (DXP). In Crocosphaera subtropica (strain ATCC 51142 / BH68) (Cyanothece sp. (strain ATCC 51142)), this protein is 1-deoxy-D-xylulose-5-phosphate synthase.